An 834-amino-acid polypeptide reads, in one-letter code: Glycerol-3-phosphate acyltransferase (834 aa).

An HXXXXD motif motif is present at residues 309–314; that stretch reads CHRSHI.

This sequence belongs to the GPAT/DAPAT family.

The protein resides in the cell inner membrane. The enzyme catalyses sn-glycerol 3-phosphate + an acyl-CoA = a 1-acyl-sn-glycero-3-phosphate + CoA. It functions in the pathway phospholipid metabolism; CDP-diacylglycerol biosynthesis; CDP-diacylglycerol from sn-glycerol 3-phosphate: step 1/3. This Pseudomonas aeruginosa (strain LESB58) protein is Glycerol-3-phosphate acyltransferase.